Consider the following 822-residue polypeptide: uncharacterized protein (822 aa).

Over 1–13 (MCHNSVRSGNKAG) the chain is Cytoplasmic. The chain crosses the membrane as a helical span at residues 14–34 (FLGIKFGSALLSIATGAIAIA). Residues 35 to 44 (LLCKFHDHEA) lie on the Extracellular side of the membrane. A helical membrane pass occupies residues 45-65 (VLIVIVCSTLLYGIPSLISFI). The Cytoplasmic portion of the chain corresponds to 66–76 (TETVFAPSKFH). Residues 77-97 (IGYFYNVLNFALPLITMGCTV) traverse the membrane as a helical segment. Topologically, residues 98–120 (DYFHNTLRSPISVQSESHRVYIT) are extracellular. Residues 121–141 (TLDSLLIFTLFINGIQLGFFL) form a helical membrane-spanning segment. Residues 142–822 (KDGNANNFGS…PVEELVSPSK (681 aa)) lie on the Cytoplasmic side of the membrane. The interval 271 to 290 (RNTQQATKVPTEKKSNHRSS) is disordered. Position 690 is a phosphoserine (S690). Residues 698–712 (TLQSSHSPTKSTSGN) are compositionally biased toward polar residues. 2 disordered regions span residues 698–728 (TLQS…STVN) and 751–783 (NGEE…GYPE). Residues 761–776 (QSIQSSSSGSEQESAG) show a composition bias toward low complexity.

The protein resides in the membrane. This is an uncharacterized protein from Saccharomyces cerevisiae (strain ATCC 204508 / S288c) (Baker's yeast).